Reading from the N-terminus, the 264-residue chain is Nicotinamide N-methyltransferase (264 aa).

Arg18 bears the Citrulline; alternate mark. Residues Tyr20 and Tyr25 each contribute to the S-adenosyl-L-methionine site. Position 39 is an N6-acetyllysine (Lys39). S-adenosyl-L-methionine contacts are provided by Gly63, Tyr69, Asp85, and Asn90. Citrulline; alternate is present on Arg132. Residues 142-143 (DV) and Thr163 contribute to the S-adenosyl-L-methionine site. A Citrulline; alternate modification is found at Arg181. Nicotinamide contacts are provided by Asp197 and Ser213.

Belongs to the class I-like SAM-binding methyltransferase superfamily. NNMT/PNMT/TEMT family. In terms of assembly, monomer. In terms of processing, deiminated by PADI1 and PADI2. As to expression, predominantly expressed in the liver. A lower expression is seen in the kidney, lung, skeletal muscle, placenta and heart. Not detected in the brain or pancreas.

Its subcellular location is the cytoplasm. It carries out the reaction nicotinamide + S-adenosyl-L-methionine = 1-methylnicotinamide + S-adenosyl-L-homocysteine. Its pathway is cofactor metabolism. It functions in the pathway amino-acid degradation. Inactivated by deimination on Arg-132. Its function is as follows. Catalyzes the N-methylation of nicotinamide using the universal methyl donor S-adenosyl-L-methionine to form N1-methylnicotinamide and S-adenosyl-L-homocysteine, a predominant nicotinamide/vitamin B3 clearance pathway. Plays a central role in regulating cellular methylation potential, by consuming S-adenosyl-L-methionine and limiting its availability for other methyltransferases. Actively mediates genome-wide epigenetic and transcriptional changes through hypomethylation of repressive chromatin marks, such as H3K27me3. In a developmental context, contributes to low levels of the repressive histone marks that characterize pluripotent embryonic stem cell pre-implantation state. Acts as a metabolic regulator primarily on white adipose tissue energy expenditure as well as hepatic gluconeogenesis and cholesterol biosynthesis. In white adipocytes, regulates polyamine flux by consuming S-adenosyl-L-methionine which provides for propylamine group in polyamine biosynthesis, whereas by consuming nicotinamide controls NAD(+) levels through the salvage pathway. Via its product N1-methylnicotinamide regulates protein acetylation in hepatocytes, by repressing the ubiquitination and increasing the stability of SIRT1 deacetylase. Can also N-methylate other pyridines structurally related to nicotinamide and play a role in xenobiotic detoxification. This is Nicotinamide N-methyltransferase from Homo sapiens (Human).